A 203-amino-acid chain; its full sequence is UPF0301 protein Sde_3637 (203 aa).

This sequence belongs to the UPF0301 (AlgH) family.

This chain is UPF0301 protein Sde_3637, found in Saccharophagus degradans (strain 2-40 / ATCC 43961 / DSM 17024).